The sequence spans 325 residues: Ribonucleoside-diphosphate reductase small chain (325 aa).

Fe cation-binding residues include D76, E107, and H110. The active site involves Y114. Fe cation is bound by residues E170, E204, and H207.

Belongs to the ribonucleoside diphosphate reductase small chain family. In terms of assembly, heterodimer of a large and a small subunit. The cofactor is Fe cation.

The enzyme catalyses a 2'-deoxyribonucleoside 5'-diphosphate + [thioredoxin]-disulfide + H2O = a ribonucleoside 5'-diphosphate + [thioredoxin]-dithiol. In terms of biological role, provides the precursors necessary for DNA synthesis. Catalyzes the biosynthesis of deoxyribonucleotides from the corresponding ribonucleotides. The polypeptide is Ribonucleoside-diphosphate reductase small chain (Encephalitozoon cuniculi (strain GB-M1) (Microsporidian parasite)).